Here is a 199-residue protein sequence, read N- to C-terminus: Recombination protein RecR (199 aa).

Residues C58–C73 form a C4-type zinc finger. Residues Q81 to P176 form the Toprim domain.

The protein belongs to the RecR family.

May play a role in DNA repair. It seems to be involved in an RecBC-independent recombinational process of DNA repair. It may act with RecF and RecO. The polypeptide is Recombination protein RecR (Syntrophotalea carbinolica (strain DSM 2380 / NBRC 103641 / GraBd1) (Pelobacter carbinolicus)).